A 263-amino-acid chain; its full sequence is SPRY domain-containing SOCS box protein 2 (263 aa).

Residues 1 to 16 (MGQTALAGGSSSTPTP) are compositionally biased toward polar residues. The disordered stretch occupies residues 1–48 (MGQTALAGGSSSTPTPQALYPDLSCPEGLEELLSAPPPDLGAQRRHGW). The 196-residue stretch at 26–221 (PEGLEELLSA…VRIRYLGERR (196 aa)) folds into the B30.2/SPRY domain. In terms of domain architecture, SOCS box spans 222–263 (AEPHSLLHLSRLCVRHNLGDTRLGQVSALPLPPAMKRYLLYQ).

This sequence belongs to the SPSB family. Component of the probable ECS(SPSB2) E3 ubiquitin-protein ligase complex which contains CUL5, RNF7/RBX2, Elongin BC complex and SPSB2. Interacts with CUL5, RNF7, ELOB and ELOC. Interacts with MET. Interacts (via B30.2/SPRY domain) with PAWR; this interaction occurs in association with the Elongin BC complex. Interacts with NOS2. As to quaternary structure, (Microbial infection) Interacts (via C-terminus) with HCV envelope glycoprotein E1. Interacts (via C-terminus) with HCV non-structural protein 5A; this interaction targets NS5A for ubiquitination and degradation.

It is found in the cytoplasm. Its subcellular location is the cytosol. It functions in the pathway protein modification; protein ubiquitination. Functionally, substrate recognition component of a SCF-like ECS (Elongin BC-CUL2/5-SOCS-box protein) E3 ubiquitin-protein ligase complex which mediates the ubiquitination and subsequent proteasomal degradation of target proteins. Negatively regulates nitric oxide (NO) production and limits cellular toxicity in activated macrophages by mediating the ubiquitination and proteasomal degradation of NOS2. Acts as a bridge which links NOS2 with the ECS E3 ubiquitin ligase complex components ELOC and CUL5. The polypeptide is SPRY domain-containing SOCS box protein 2 (SPSB2) (Homo sapiens (Human)).